Reading from the N-terminus, the 311-residue chain is Methionyl-tRNA formyltransferase (311 aa).

Position 110-113 (Ser110–Pro113) interacts with (6S)-5,6,7,8-tetrahydrofolate.

This sequence belongs to the Fmt family.

The enzyme catalyses L-methionyl-tRNA(fMet) + (6R)-10-formyltetrahydrofolate = N-formyl-L-methionyl-tRNA(fMet) + (6S)-5,6,7,8-tetrahydrofolate + H(+). Functionally, attaches a formyl group to the free amino group of methionyl-tRNA(fMet). The formyl group appears to play a dual role in the initiator identity of N-formylmethionyl-tRNA by promoting its recognition by IF2 and preventing the misappropriation of this tRNA by the elongation apparatus. The protein is Methionyl-tRNA formyltransferase of Streptococcus pneumoniae (strain P1031).